Consider the following 508-residue polypeptide: RanBP-type and C3HC4-type zinc finger-containing protein 1 (508 aa).

Met-1 is modified (N-acetylmethionine). Positions 1–218 are interaction with IRF3; sequence MDEKTKKAEE…PGCEMCCRAR (218 aa). Residues 1-268 form an interaction with TAB2 region; sequence MDEKTKKAEE…NYLQHVQLEQ (268 aa). Phosphoserine is present on Ser-50. The 65-residue stretch at 55–119 folds into the Ubiquitin-like domain; it reads IRLCVSVEDA…DQETLHSHGI (65 aa). The interaction with RNF31 stretch occupies residues 69–131; it reads VTIWLTVRPD…NGDGAYLYLL (63 aa). The segment at 163–191 is disordered; that stretch reads QSRGPLEPVLPKPRTNQEPGQPDAAPESP. The segment at 188–220 adopts a RanBP2-type zinc-finger fold; sequence PESPPVGWQCPGCTFINKPTRPGCEMCCRARPE. Positions 231–259 form a coiled coil; it reads DEEERARLAGEEEALRQYQQRKQQQQEGN. Residues 276-504 form a TRIAD supradomain region; it reads EPTECPVCYS…VNGIPCHPSC (229 aa). Zn(2+)-binding residues include Cys-280, Cys-283, Cys-298, His-300, Cys-303, Cys-306, and Cys-321. The RING-type 1 zinc finger occupies 280–330; sequence CPVCYSVLAPGEAVVLRECLHTFCRECLQGTIRNSQEAEVACPFIDSTYSC. The residue at position 328 (Tyr-328) is a Phosphotyrosine. Zn(2+)-binding residues include Cys-330, Cys-369, Cys-374, Cys-389, Cys-392, Cys-397, Cys-400, His-404, Cys-409, Cys-445, and Cys-448. The segment at 349–409 adopts an IBR-type zinc-finger fold; that stretch reads QRFLDLGVSI…CKAIHEHMNC (61 aa). An RING-type 2; atypical zinc finger spans residues 445–474; it reads CPQCRIVVQKKDGCDWIRCTVCHTEICWVT. Residue Cys-458 is part of the active site. Zn(2+) contacts are provided by Cys-463 and Cys-466.

The protein belongs to the RBR family. In terms of assembly, component of the LUBAC complex (linear ubiquitin chain assembly complex) which consists of SHARPIN, RBCK1 and RNF31. LUBAC has a MW of approximately 600 kDa suggesting a heteromultimeric assembly of its subunits. Interacts with beta-I-type (PRKCB1) and zeta-type protein kinase C (PRKCZ). Interacts with UBE2L3. Interacts with IREB2 only in iron-rich conditions. Associates with the TNF-R1 signaling complex (TNF-RSC) in a stimulation-dependent manner. Interacts with EYA1, TAB2, TAB3, MAP3K7 TRAF6 and RIPK1. Interacts with IRF3. In terms of processing, auto-ubiquitinated. Auto-ubiquitination leads to degradation by the proteasome. Phosphorylated. In vitro, phosphorylation inhibits auto-ubiquitination activity.

It catalyses the reaction [E2 ubiquitin-conjugating enzyme]-S-ubiquitinyl-L-cysteine + [acceptor protein]-L-lysine = [E2 ubiquitin-conjugating enzyme]-L-cysteine + [acceptor protein]-N(6)-ubiquitinyl-L-lysine.. Its pathway is protein modification; protein ubiquitination. Functionally, E3 ubiquitin-protein ligase, which accepts ubiquitin from specific E2 ubiquitin-conjugating enzymes, such as UBE2L3/UBCM4, and then transfers it to substrates. Functions as an E3 ligase for oxidized IREB2 and both heme and oxygen are necessary for IREB2 ubiquitination. Promotes ubiquitination of TAB2 and IRF3 and their degradation by the proteasome. Component of the LUBAC complex which conjugates linear ('Met-1'-linked) polyubiquitin chains to substrates and plays a key role in NF-kappa-B activation and regulation of inflammation. LUBAC conjugates linear polyubiquitin to IKBKG and RIPK1 and is involved in activation of the canonical NF-kappa-B and the JNK signaling pathways. Linear ubiquitination mediated by the LUBAC complex interferes with TNF-induced cell death and thereby prevents inflammation. LUBAC is recruited to the TNF-R1 signaling complex (TNF-RSC) following polyubiquitination of TNF-RSC components by BIRC2 and/or BIRC3 and to conjugate linear polyubiquitin to IKBKG and possibly other components contributing to the stability of the complex. The LUBAC complex is also involved in innate immunity by conjugating linear polyubiquitin chains at the surface of bacteria invading the cytosol to form the ubiquitin coat surrounding bacteria. LUBAC is not able to initiate formation of the bacterial ubiquitin coat, and can only promote formation of linear polyubiquitins on pre-existing ubiquitin. The bacterial ubiquitin coat acts as an 'eat-me' signal for xenophagy and promotes NF-kappa-B activation. Together with OTULIN, the LUBAC complex regulates the canonical Wnt signaling during angiogenesis. Binds polyubiquitin of different linkage types. In Mus musculus (Mouse), this protein is RanBP-type and C3HC4-type zinc finger-containing protein 1 (Rbck1).